Consider the following 61-residue polypeptide: Alpha-conotoxin-like Tx1.2 (61 aa).

Residues 1-20 (MFTVFLLVVLATTVVSFTSG) form the signal peptide. Positions 21–42 (RSTFRGRNAAAKASGLVSLTDR) are excised as a propeptide. A 4-hydroxyproline mark is found at P44 and P50. Disulfide bonds link C46/C52 and C47/C60. A ser-Xaa-Pro motif, crucial for potent interaction with nAChR region spans residues 48 to 50 (SHP).

This sequence belongs to the conotoxin A superfamily. In terms of tissue distribution, expressed by the venom duct.

It localises to the secreted. Functionally, alpha-conotoxins act on postsynaptic membranes, they bind to the nicotinic acetylcholine receptors (nAChR) and thus inhibit them. This toxin also inhibits high voltage-activated (HVA) calcium channel currents in rat DRG neurons (8% inhibition at 1 uM toxin) probably by activating GABA(B) receptors (GABBR1 and/or GABBR2). The chain is Alpha-conotoxin-like Tx1.2 from Conus textile (Cloth-of-gold cone).